The primary structure comprises 153 residues: 3-hydroxyacyl-[acyl-carrier-protein] dehydratase FabZ (153 aa).

Residue His-47 is part of the active site.

It belongs to the thioester dehydratase family. FabZ subfamily.

It is found in the cytoplasm. It carries out the reaction a (3R)-hydroxyacyl-[ACP] = a (2E)-enoyl-[ACP] + H2O. Its function is as follows. Involved in unsaturated fatty acids biosynthesis. Catalyzes the dehydration of short chain beta-hydroxyacyl-ACPs and long chain saturated and unsaturated beta-hydroxyacyl-ACPs. In Dichelobacter nodosus (strain VCS1703A), this protein is 3-hydroxyacyl-[acyl-carrier-protein] dehydratase FabZ.